We begin with the raw amino-acid sequence, 426 residues long: Glutamate-1-semialdehyde 2,1-aminomutase (426 aa).

The residue at position 265 (K265) is an N6-(pyridoxal phosphate)lysine.

This sequence belongs to the class-III pyridoxal-phosphate-dependent aminotransferase family. HemL subfamily. As to quaternary structure, homodimer. Pyridoxal 5'-phosphate serves as cofactor.

Its subcellular location is the cytoplasm. The catalysed reaction is (S)-4-amino-5-oxopentanoate = 5-aminolevulinate. The protein operates within porphyrin-containing compound metabolism; protoporphyrin-IX biosynthesis; 5-aminolevulinate from L-glutamyl-tRNA(Glu): step 2/2. This Shigella flexneri serotype 5b (strain 8401) protein is Glutamate-1-semialdehyde 2,1-aminomutase.